The chain runs to 356 residues: Arginine kinase (356 aa).

An N-acetylalanine modification is found at A2. Residues 9 to 91 (KLEEGFKKLE…FDPIIEDYHK (83 aa)) form the Phosphagen kinase N-terminal domain. Residue 64 to 68 (GVGIY) coordinates L-arginine. Residues 119 to 356 (FVISTRVRCG…LELIKIEKEM (238 aa)) enclose the Phosphagen kinase C-terminal domain. ATP contacts are provided by residues 122 to 126 (STRVR) and H185. Position 225 (E225) interacts with L-arginine. R229 lines the ATP pocket. L-arginine is bound at residue C271. Residues 280 to 284 (RASVH) and 309 to 314 (RGTRGE) contribute to the ATP site. Residue E314 participates in L-arginine binding.

This sequence belongs to the ATP:guanido phosphotransferase family.

The catalysed reaction is L-arginine + ATP = N(omega)-phospho-L-arginine + ADP + H(+). This Homarus gammarus (European lobster) protein is Arginine kinase.